The chain runs to 333 residues: MARHSFFCVDGHTCGNPVRLVAGGGPNLNGSTMMEKRAHFLAEYDWIRTGLMFEPRGHDMMSGSILYPPTRPDCDVAVLFIETSGCLPMCGHGTIGTVTMAIEQGLVTPKTPGKLNLDTPAGLVAIEYEQDGQYVERVRLTNVPAFLYAEGLEVECPDLGPIKVDVAYGGNFYAIVEPQENYTDMDDYSALQLIAWSPVLRQRLNEKYKFQHPELPDINRLSHILWTGKPKHPQAHARNAVFYGDKAIDRSPCGTGTSARMAQLAAKGKLKPGDEFIHESIIGSLFHGRVERAAEVAGRPAIVPSIAGWARMTGYNTIFIDDRDPFAHGFSVA.

Cys90 acts as the Proton acceptor in catalysis. Substrate contacts are provided by residues 91–92 (GH) and Asp249. Cys253 functions as the Proton donor in the catalytic mechanism. 254–255 (GT) serves as a coordination point for substrate.

Belongs to the proline racemase family. In terms of assembly, homodimer.

The catalysed reaction is trans-4-hydroxy-L-proline = cis-4-hydroxy-D-proline. In terms of biological role, allows intracellular utilization of 4-hydroxyproline, one of the major constituents of host collagen, by converting 4-hydroxy-L-proline to 4-hydroxy-D-proline, which can be further metabolized by intracellular 4-hydroxy-D-proline oxidases. Strong B-cell mitogen. Plays an important role in the regulation of intra- and extracellular amino acid pools, allowing the bacterium to profit from host precursors and enzymatic pathways. In Brucella canis (strain ATCC 23365 / NCTC 10854 / RM-666), this protein is 4-hydroxyproline epimerase.